The chain runs to 550 residues: Methionine--tRNA ligase (550 aa).

The 'HIGH' region motif lies at 12–22; the sequence is PYANGPLHFGH. 4 residues coordinate Zn(2+): C144, C147, C157, and C160. The short motif at 330–334 is the 'KMSKS' region element; it reads QFSKS. K333 contributes to the ATP binding site.

Belongs to the class-I aminoacyl-tRNA synthetase family. MetG type 1 subfamily. In terms of assembly, monomer. The cofactor is Zn(2+).

It is found in the cytoplasm. The catalysed reaction is tRNA(Met) + L-methionine + ATP = L-methionyl-tRNA(Met) + AMP + diphosphate. Functionally, is required not only for elongation of protein synthesis but also for the initiation of all mRNA translation through initiator tRNA(fMet) aminoacylation. This chain is Methionine--tRNA ligase, found in Chlamydia caviae (strain ATCC VR-813 / DSM 19441 / 03DC25 / GPIC) (Chlamydophila caviae).